Here is a 527-residue protein sequence, read N- to C-terminus: Cyclin-L1 (527 aa).

Positions 1–37 (MASGPHPTSTAAAASASSAAPSAGGSSSGTTTTTTTT) are disordered. 2 cyclin-like regions span residues 89–191 (ELIQ…RVLK) and 204–288 (KIIV…ETLR). Thr-326 carries the post-translational modification Phosphothreonine. The interval 327-527 (PALSTLGGFS…SRSGHGRHRR (201 aa)) is disordered. 2 positions are modified to phosphoserine: Ser-336 and Ser-339. Residues Lys-340 and Lys-348 each participate in a glycyl lysine isopeptide (Lys-Gly) (interchain with G-Cter in SUMO2) cross-link. Positions 343-353 (SPREVKAEEKS) are enriched in basic and acidic residues. A phosphoserine mark is found at Ser-353 and Ser-356. Basic and acidic residues predominate over residues 362-371 (VKKEPEDRQQ). Lys-363 participates in a covalent cross-link: Glycyl lysine isopeptide (Lys-Gly) (interchain with G-Cter in SUMO2). Position 375 is a phosphoserine (Ser-375). Composition is skewed to basic residues over residues 383 to 419 (DSKR…RRSR), 439 to 453 (RRHH…KAKH), 461 to 477 (SNRH…RSQS), and 487 to 499 (KKHR…HRDR). The tract at residues 391–433 (RSASRSRSRTRSRSRSHTPRRHYNNRRSRSGTYSSRSRSRSRS) is RS. At Ser-446 the chain carries Phosphoserine. A compositionally biased stretch (basic and acidic residues) spans 500-509 (RERSRSFERS). Positions 510–527 (HKGKHHGGSRSGHGRHRR) are enriched in basic residues.

Belongs to the cyclin family. Cyclin L subfamily. As to quaternary structure, interacts with POLR2A via its hyperphosphorylated C-terminal domain (CTD). Interacts with CDK11A, CDK11B, CDK12 and CDK13. May form a ternary complex with CDK11B and casein kinase II (CKII). Interacts with pre-mRNA-splicing factors, including at least SRSF1, SRSF2 AND SRSF7/SLU7. Ubiquitous with higher level in liver; expressed in striatal neurons.

It is found in the nucleus speckle. It localises to the nucleus. Its subcellular location is the nucleoplasm. Involved in pre-mRNA splicing. Functions in association with cyclin-dependent kinases (CDKs). May play a role in the regulation of RNA polymerase II (pol II). Inhibited by the CDK-specific inhibitor CDKN1A/p21. In Rattus norvegicus (Rat), this protein is Cyclin-L1 (Ccnl1).